A 254-amino-acid polypeptide reads, in one-letter code: tRNA (guanine-N(1)-)-methyltransferase (254 aa).

Residues G115 and 135-140 (VGDFVL) each bind S-adenosyl-L-methionine.

Belongs to the RNA methyltransferase TrmD family. In terms of assembly, homodimer.

Its subcellular location is the cytoplasm. It carries out the reaction guanosine(37) in tRNA + S-adenosyl-L-methionine = N(1)-methylguanosine(37) in tRNA + S-adenosyl-L-homocysteine + H(+). Specifically methylates guanosine-37 in various tRNAs. The chain is tRNA (guanine-N(1)-)-methyltransferase from Francisella tularensis subsp. tularensis (strain FSC 198).